The primary structure comprises 218 residues: Large ribosomal subunit protein uL3 (218 aa).

The protein belongs to the universal ribosomal protein uL3 family. In terms of assembly, part of the 50S ribosomal subunit. Forms a cluster with proteins L14 and L19.

In terms of biological role, one of the primary rRNA binding proteins, it binds directly near the 3'-end of the 23S rRNA, where it nucleates assembly of the 50S subunit. The protein is Large ribosomal subunit protein uL3 of Mycolicibacterium gilvum (strain PYR-GCK) (Mycobacterium gilvum (strain PYR-GCK)).